Here is a 208-residue protein sequence, read N- to C-terminus: Urease accessory protein UreG (208 aa).

Glycine 12–threonine 19 provides a ligand contact to GTP.

The protein belongs to the SIMIBI class G3E GTPase family. UreG subfamily. As to quaternary structure, homodimer. UreD, UreF and UreG form a complex that acts as a GTP-hydrolysis-dependent molecular chaperone, activating the urease apoprotein by helping to assemble the nickel containing metallocenter of UreC. The UreE protein probably delivers the nickel.

The protein localises to the cytoplasm. In terms of biological role, facilitates the functional incorporation of the urease nickel metallocenter. This process requires GTP hydrolysis, probably effectuated by UreG. The sequence is that of Urease accessory protein UreG from Rhodobacter capsulatus (Rhodopseudomonas capsulata).